The primary structure comprises 1102 residues: Carbamoyl phosphate synthase large chain (1102 aa).

The carboxyphosphate synthetic domain stretch occupies residues 1 to 408 (MPKRSDIQSV…ALQKALRSLE (408 aa)). Arginine 129, arginine 175, glycine 181, glycine 182, glutamate 214, isoleucine 216, glutamate 221, glycine 247, valine 248, histidine 249, glutamine 291, and glutamate 305 together coordinate ATP. The 198-residue stretch at 137 to 334 (EAVKEKIGYG…IAKIAAKLAV (198 aa)) folds into the ATP-grasp 1 domain. 3 residues coordinate Mg(2+): glutamine 291, glutamate 305, and asparagine 307. Residues glutamine 291, glutamate 305, and asparagine 307 each contribute to the Mn(2+) site. The oligomerization domain stretch occupies residues 409 to 551 (KKGSQFAFTG…YFYSSYDEES (143 aa)). The tract at residues 552 to 954 (EVAPRTKPAV…AYAKSQAGAY (403 aa)) is carbamoyl phosphate synthetic domain. The ATP-grasp 2 domain occupies 682-873 (GRVLAEAGLP…LAKAAARISL (192 aa)). ATP is bound by residues arginine 718, arginine 757, leucine 759, glutamate 764, glycine 789, isoleucine 790, histidine 791, serine 792, glutamine 832, and glutamate 844. Positions 832, 844, and 846 each coordinate Mg(2+). Mn(2+)-binding residues include glutamine 832, glutamate 844, and asparagine 846. An MGS-like domain is found at 955–1100 (GPLPTAGRAF…QEHAEHLTAA (146 aa)). Residues 955 to 1102 (GPLPTAGRAF…HAEHLTAARD (148 aa)) form an allosteric domain region.

The protein belongs to the CarB family. Composed of two chains; the small (or glutamine) chain promotes the hydrolysis of glutamine to ammonia, which is used by the large (or ammonia) chain to synthesize carbamoyl phosphate. Tetramer of heterodimers (alpha,beta)4. It depends on Mg(2+) as a cofactor. Mn(2+) is required as a cofactor.

It catalyses the reaction hydrogencarbonate + L-glutamine + 2 ATP + H2O = carbamoyl phosphate + L-glutamate + 2 ADP + phosphate + 2 H(+). It carries out the reaction hydrogencarbonate + NH4(+) + 2 ATP = carbamoyl phosphate + 2 ADP + phosphate + 2 H(+). The protein operates within amino-acid biosynthesis; L-arginine biosynthesis; carbamoyl phosphate from bicarbonate: step 1/1. It participates in pyrimidine metabolism; UMP biosynthesis via de novo pathway; (S)-dihydroorotate from bicarbonate: step 1/3. Functionally, large subunit of the glutamine-dependent carbamoyl phosphate synthetase (CPSase). CPSase catalyzes the formation of carbamoyl phosphate from the ammonia moiety of glutamine, carbonate, and phosphate donated by ATP, constituting the first step of 2 biosynthetic pathways, one leading to arginine and/or urea and the other to pyrimidine nucleotides. The large subunit (synthetase) binds the substrates ammonia (free or transferred from glutamine from the small subunit), hydrogencarbonate and ATP and carries out an ATP-coupled ligase reaction, activating hydrogencarbonate by forming carboxy phosphate which reacts with ammonia to form carbamoyl phosphate. The sequence is that of Carbamoyl phosphate synthase large chain from Streptomyces griseus subsp. griseus (strain JCM 4626 / CBS 651.72 / NBRC 13350 / KCC S-0626 / ISP 5235).